The chain runs to 154 residues: Ribonuclease H (154 aa).

The RNase H type-1 domain maps to 1-142 (MRKQVEIFTD…CDELARAAAG (142 aa)). D10, E48, D70, and D134 together coordinate Mg(2+).

This sequence belongs to the RNase H family. As to quaternary structure, monomer. Requires Mg(2+) as cofactor.

It localises to the cytoplasm. It catalyses the reaction Endonucleolytic cleavage to 5'-phosphomonoester.. In terms of biological role, endonuclease that specifically degrades the RNA of RNA-DNA hybrids. The chain is Ribonuclease H from Pectobacterium carotovorum subsp. carotovorum (strain PC1).